The following is a 77-amino-acid chain: Teretoxin Tan15.2 (77 aa).

Positions 1-21 are cleaved as a signal peptide; the sequence is MTRLTVVFLAILVLLPLATSN. The propeptide occupies 22–40; the sequence is SGADEAPASLSDLLHRTKR.

In terms of processing, contains 4 disulfide bonds. In terms of tissue distribution, expressed by the venom duct.

The protein localises to the secreted. The chain is Teretoxin Tan15.2 from Terebra anilis (Auger snail).